The primary structure comprises 247 residues: 5'-nucleotidase SurE (247 aa).

A divalent metal cation is bound by residues Asp8, Asp9, Ser39, and Asn91.

This sequence belongs to the SurE nucleotidase family. It depends on a divalent metal cation as a cofactor.

It localises to the cytoplasm. The catalysed reaction is a ribonucleoside 5'-phosphate + H2O = a ribonucleoside + phosphate. Nucleotidase that shows phosphatase activity on nucleoside 5'-monophosphates. This Azoarcus sp. (strain BH72) protein is 5'-nucleotidase SurE.